The sequence spans 99 residues: Small ribosomal subunit protein bS18 (99 aa).

Basic and acidic residues predominate over residues 1–25; that stretch reads MAEDHPSVDLDTHLSSPRESEESAP. The interval 1–28 is disordered; that stretch reads MAEDHPSVDLDTHLSSPRESEESAPKKN.

It belongs to the bacterial ribosomal protein bS18 family. In terms of assembly, part of the 30S ribosomal subunit. Forms a tight heterodimer with protein bS6.

Functionally, binds as a heterodimer with protein bS6 to the central domain of the 16S rRNA, where it helps stabilize the platform of the 30S subunit. The protein is Small ribosomal subunit protein bS18 of Treponema pallidum (strain Nichols).